Reading from the N-terminus, the 241-residue chain is Endodeoxyribonuclease NucC (241 aa).

Catalysis depends on residues D73, E104, and K106. Mg(2+) is bound by residues D73 and E104.

It belongs to the NucC endonuclease family. As to quaternary structure, self-oligomerizes. Forms homotrimers; in the presence of cAAA the trimers associate face-to-face to form homohexamers. The 2 cAAA-binding sites are on the exterior of the hexamer at the three-way junction, there are maximally 2 cyclic nucleotides per hexamer. Mg(2+) serves as cofactor.

With respect to regulation, activated by cAAA and to a lesser extent cAA and cAAG; cAAA and cAA are products of its cognate CD-NTase. Cyclic nucleotide binding causes hexamerization. Cyclic nucleotide binding causes a series of shifts that enclose the cAAA molecule, enable hexamer formation and juxtapose pairs of active sites to allow dsDNA cleavage. Functionally, effector DNase of a CBASS antivirus system. CBASS (cyclic oligonucleotide-based antiphage signaling system) provides immunity against bacteriophage. The CD-NTase protein synthesizes cyclic nucleotides in response to infection; these serve as specific second messenger signals. The signals activate a diverse range of effectors, leading to bacterial cell death and thus abortive phage infection. A type III-C(AAA) CBASS system. Its function is as follows. A cyclic nucleotide-activated dsDNase. In the presence of 3',3',3'-cyclic AMP-AMP-AMP (cAAA), and to a lesser extent 3',3',3'-cyclic AMP-AMP-GMP (cAAG) and cyclic-di-AMP (c-di-AMP), endonucleolytically degrades dsDNA. Binds one cAAA in a pocket on one surface of the trimer; cAAA binding promotes hexamerization, which is necessary for nuclease activation. Also binds c-diAMP or linear di-AMP with lower affinity. The nuclease digests dsDNA to about 50 bp lengths with a 2-base 3' overhang and a consensus recognition site of 5'-Axx|T-3'. DNA has been modeled to contact a pair of juxtaposed active sites (one from each layer of the hexamer), accounting for cleavage on both strands and the 2-base overhang. Protects E.coli strain JP313 against bacteriophage lambda cI- infection. When the cdnC-cap7-cap6-nucC operon is transformed into a susceptible strain it confers bacteriophage immunity. Mutations in the sensor (Cap7 also called HORMA) or effector proteins (CdnC, NucC) but not the disassembly protein (Cap6 also called Trip13) no longer confer immunity. The presence of the intact operon leads to culture collapse and cell death which occurs before the phage has finished its replication cycle, thus protecting non-infected bacteria by aborting the phage infection and preventing its propagation. The sequence is that of Endodeoxyribonuclease NucC from Escherichia coli (strain MS 115-1).